A 646-amino-acid polypeptide reads, in one-letter code: Threonine--tRNA ligase (646 aa).

The TGS domain occupies 1–63; that stretch reads MAQISLTFPD…ETDAKIAIHT (63 aa). The catalytic stretch occupies residues 247-544; sequence DHRKLGREME…LIENYAGKLP (298 aa). Residues C344, H395, and H521 each contribute to the Zn(2+) site.

It belongs to the class-II aminoacyl-tRNA synthetase family. As to quaternary structure, homodimer. The cofactor is Zn(2+).

Its subcellular location is the cytoplasm. The enzyme catalyses tRNA(Thr) + L-threonine + ATP = L-threonyl-tRNA(Thr) + AMP + diphosphate + H(+). Its function is as follows. Catalyzes the attachment of threonine to tRNA(Thr) in a two-step reaction: L-threonine is first activated by ATP to form Thr-AMP and then transferred to the acceptor end of tRNA(Thr). Also edits incorrectly charged L-seryl-tRNA(Thr). In Cereibacter sphaeroides (strain ATCC 17029 / ATH 2.4.9) (Rhodobacter sphaeroides), this protein is Threonine--tRNA ligase.